Consider the following 334-residue polypeptide: Putative binding protein YtlA (334 aa).

Residues Met-1–Ala-23 form the signal peptide. Cys-24 is lipidated: N-palmitoyl cysteine. Cys-24 carries the S-diacylglycerol cysteine lipid modification.

Belongs to the bacterial solute-binding protein SsuA/TauA family.

The protein resides in the cell membrane. The protein is Putative binding protein YtlA (ytlA) of Bacillus subtilis (strain 168).